Reading from the N-terminus, the 427-residue chain is Trigger factor (427 aa).

The region spanning 163–248 (GDIVVIDFAG…LKEIKRKELA (86 aa)) is the PPIase FKBP-type domain.

It belongs to the FKBP-type PPIase family. Tig subfamily.

The protein resides in the cytoplasm. The enzyme catalyses [protein]-peptidylproline (omega=180) = [protein]-peptidylproline (omega=0). Functionally, involved in protein export. Acts as a chaperone by maintaining the newly synthesized protein in an open conformation. Functions as a peptidyl-prolyl cis-trans isomerase. The chain is Trigger factor from Carboxydothermus hydrogenoformans (strain ATCC BAA-161 / DSM 6008 / Z-2901).